We begin with the raw amino-acid sequence, 501 residues long: Aspartyl/glutamyl-tRNA(Asn/Gln) amidotransferase subunit B (501 aa).

It belongs to the GatB/GatE family. GatB subfamily. As to quaternary structure, heterotrimer of A, B and C subunits.

The enzyme catalyses L-glutamyl-tRNA(Gln) + L-glutamine + ATP + H2O = L-glutaminyl-tRNA(Gln) + L-glutamate + ADP + phosphate + H(+). It catalyses the reaction L-aspartyl-tRNA(Asn) + L-glutamine + ATP + H2O = L-asparaginyl-tRNA(Asn) + L-glutamate + ADP + phosphate + 2 H(+). Functionally, allows the formation of correctly charged Asn-tRNA(Asn) or Gln-tRNA(Gln) through the transamidation of misacylated Asp-tRNA(Asn) or Glu-tRNA(Gln) in organisms which lack either or both of asparaginyl-tRNA or glutaminyl-tRNA synthetases. The reaction takes place in the presence of glutamine and ATP through an activated phospho-Asp-tRNA(Asn) or phospho-Glu-tRNA(Gln). The protein is Aspartyl/glutamyl-tRNA(Asn/Gln) amidotransferase subunit B of Agrobacterium fabrum (strain C58 / ATCC 33970) (Agrobacterium tumefaciens (strain C58)).